The primary structure comprises 307 residues: uncharacterized protein (307 aa).

Composition is skewed to basic and acidic residues over residues 42–52 (TCRSPGEDKCP) and 112–121 (QKKEEPEGSH). The segment at 42 to 153 (TCRSPGEDKC…VPPAVASASA (112 aa)) is disordered. A compositionally biased stretch (basic residues) spans 129–139 (KQHKKAKKRKS).

This is an uncharacterized protein from Mus musculus (Mouse).